A 165-amino-acid chain; its full sequence is Protein SprT (165 aa).

Positions 20–163 constitute a SprT-like domain; it reads ENLAQANLKL…RCVHCGEPLV (144 aa). His-78 contributes to the Zn(2+) binding site. The active site involves Glu-79. His-82 contributes to the Zn(2+) binding site.

Belongs to the SprT family. It depends on Zn(2+) as a cofactor.

Its subcellular location is the cytoplasm. This Salmonella arizonae (strain ATCC BAA-731 / CDC346-86 / RSK2980) protein is Protein SprT.